A 388-amino-acid polypeptide reads, in one-letter code: S-adenosylmethionine synthase (388 aa).

H16 contacts ATP. Position 18 (D18) interacts with Mg(2+). E44 is a K(+) binding site. L-methionine is bound by residues E57 and Q100. The tract at residues 100–110 is flexible loop; sequence QSPEIAQGVDR. ATP contacts are provided by residues 165 to 167, D240, 246 to 247, A263, and K267; these read DAK and RK. D240 is a binding site for L-methionine. Residue K271 coordinates L-methionine.

It belongs to the AdoMet synthase family. Homotetramer; dimer of dimers. Mg(2+) is required as a cofactor. It depends on K(+) as a cofactor.

The protein resides in the cytoplasm. The enzyme catalyses L-methionine + ATP + H2O = S-adenosyl-L-methionine + phosphate + diphosphate. It participates in amino-acid biosynthesis; S-adenosyl-L-methionine biosynthesis; S-adenosyl-L-methionine from L-methionine: step 1/1. In terms of biological role, catalyzes the formation of S-adenosylmethionine (AdoMet) from methionine and ATP. The overall synthetic reaction is composed of two sequential steps, AdoMet formation and the subsequent tripolyphosphate hydrolysis which occurs prior to release of AdoMet from the enzyme. The polypeptide is S-adenosylmethionine synthase (Acinetobacter baylyi (strain ATCC 33305 / BD413 / ADP1)).